A 367-amino-acid chain; its full sequence is MKASPHRPTKALIHLGAIRQNIQQMGAHIPQGTLKLAVVKANAYGHGAVAVAKAIQDDVDGFCVSNIDEAIELRQAGLSKPILILGVSEIEAVALAKEYDFTLTVAGLEWIQALLDKEVDLTGLTVHLKIDSGMGRIGFREASEVEQAQDLLQQHGVCVEGIFTHFATADEESDDYFNAQLERFKTILASMKEVPELVHASNSATTLWHVETIFNAVRMGDAMYGLNPSGAVLDLPYDLIPALTLESALVHVKTVPAGACMGYGATYQADSEQVIATVPIGYADGWTRDMQNFSVLVDGQACPIVGRVSMDQITIRLPKLYPLGTKVTLIGSNGDKEITATQVATYRVTINYEVVCLLSDRIPREYY.

The active-site Proton acceptor; specific for D-alanine is the K40. At K40 the chain carries N6-(pyridoxal phosphate)lysine. R136 is a substrate binding site. The Proton acceptor; specific for L-alanine role is filled by Y263. Position 310 (M310) interacts with substrate.

It belongs to the alanine racemase family. The cofactor is pyridoxal 5'-phosphate.

It catalyses the reaction L-alanine = D-alanine. The protein operates within amino-acid biosynthesis; D-alanine biosynthesis; D-alanine from L-alanine: step 1/1. Functionally, catalyzes the interconversion of L-alanine and D-alanine. May also act on other amino acids. The protein is Alanine racemase (alr) of Streptococcus pneumoniae (strain ATCC 700669 / Spain 23F-1).